The chain runs to 313 residues: Metaxin-3 (313 aa).

The disordered stretch occupies residues 280–313 (EKMDDNLRSSPQHRPHRHEAKPSAPASDRNSTPA).

It belongs to the metaxin family. In terms of assembly, part of a large protein complex spanning both mitochondrial membranes termed the mitochondrial intermembrane space bridging (MIB) complex.

The protein localises to the mitochondrion. The protein resides in the mitochondrion outer membrane. Functionally, could function in transport of proteins into the mitochondrion. In Danio rerio (Zebrafish), this protein is Metaxin-3 (mtx3).